Consider the following 899-residue polypeptide: Bifunctional uridylyltransferase/uridylyl-removing enzyme (899 aa).

The segment at 1–342 (MPQVDPDLFD…PGDAAGRVEP (342 aa)) is uridylyltransferase. Residues 343-705 (LNERFQVRDG…TTQREFEGAT (363 aa)) form a uridylyl-removing region. In terms of domain architecture, HD spans 461-583 (VDAHTLNLIK…VRDQTYLDYL (123 aa)). 2 consecutive ACT domains span residues 706 to 789 (QIFI…IIQR) and 816 to 899 (ILEI…RISI).

The protein belongs to the GlnD family. Requires Mg(2+) as cofactor.

The catalysed reaction is [protein-PII]-L-tyrosine + UTP = [protein-PII]-uridylyl-L-tyrosine + diphosphate. The enzyme catalyses [protein-PII]-uridylyl-L-tyrosine + H2O = [protein-PII]-L-tyrosine + UMP + H(+). With respect to regulation, uridylyltransferase (UTase) activity is inhibited by glutamine, while glutamine activates uridylyl-removing (UR) activity. Functionally, modifies, by uridylylation and deuridylylation, the PII regulatory proteins (GlnB and homologs), in response to the nitrogen status of the cell that GlnD senses through the glutamine level. Under low glutamine levels, catalyzes the conversion of the PII proteins and UTP to PII-UMP and PPi, while under higher glutamine levels, GlnD hydrolyzes PII-UMP to PII and UMP (deuridylylation). Thus, controls uridylylation state and activity of the PII proteins, and plays an important role in the regulation of nitrogen fixation and metabolism. The polypeptide is Bifunctional uridylyltransferase/uridylyl-removing enzyme (Azotobacter vinelandii (strain DJ / ATCC BAA-1303)).